Reading from the N-terminus, the 306-residue chain is tRNA dimethylallyltransferase 2 (306 aa).

11-18 (GPTASGKT) is a binding site for ATP. Residue 13–18 (TASGKT) participates in substrate binding. Residues 36 to 39 (DSRQ) form an interaction with substrate tRNA region.

It belongs to the IPP transferase family. Monomer. The cofactor is Mg(2+).

The enzyme catalyses adenosine(37) in tRNA + dimethylallyl diphosphate = N(6)-dimethylallyladenosine(37) in tRNA + diphosphate. Its function is as follows. Catalyzes the transfer of a dimethylallyl group onto the adenine at position 37 in tRNAs that read codons beginning with uridine, leading to the formation of N6-(dimethylallyl)adenosine (i(6)A). The polypeptide is tRNA dimethylallyltransferase 2 (Bacteroides fragilis (strain ATCC 25285 / DSM 2151 / CCUG 4856 / JCM 11019 / LMG 10263 / NCTC 9343 / Onslow / VPI 2553 / EN-2)).